The primary structure comprises 82 residues: UPF0437 protein in nifX-nifW intergenic region (82 aa).

This sequence belongs to the UPF0437 family.

The polypeptide is UPF0437 protein in nifX-nifW intergenic region (Frankia alni).